A 190-amino-acid polypeptide reads, in one-letter code: Histone-arginine methyltransferase METTL23 (190 aa).

It belongs to the methyltransferase superfamily. METTL23 family. As to quaternary structure, interacts with HSPA5, HSP90B1, TUBULIN, UGGT1 and UGGT2. Interacts with TET3. Interacts with STPG4.

It localises to the nucleus. The protein localises to the cytoplasm. It catalyses the reaction L-arginyl-[protein] + 2 S-adenosyl-L-methionine = N(omega),N(omega)-dimethyl-L-arginyl-[protein] + 2 S-adenosyl-L-homocysteine + 2 H(+). Functionally, histone methyltransferase that dimethylates histone H3 at 'Arg-17', forming asymmetric dimethylarginine (H3R17me2a), leading to activate transcription via chromatin remodeling. Maternal factor involved in epigenetic chromatin reprogramming of the paternal genome in the zygote: mediates H3R17me2a, promoting histone H3.3 incorporation in the male pronucleus, leading to TET3 recruitment and subsequent DNA demethylation. This Homo sapiens (Human) protein is Histone-arginine methyltransferase METTL23.